An 872-amino-acid polypeptide reads, in one-letter code: Paramyosin (872 aa).

The interval Met1 to Asp31 is nonhelical region. Residues Leu32–Lys851 adopt a coiled-coil conformation. The segment at Glu294–Leu376 is interaction with unc-89. A nonhelical region region spans residues Val856–Phe866.

It belongs to the paramyosin family. As to quaternary structure, homodimer. May interact with unc-89 (via SH3 domain). Post-translationally, phosphorylated on serine residues in the N-terminal non-helical region. Expressed in body wall muscles of larvae and adults (at protein level). Expressed in gonadal myoepithelial sheath cells (at protein level).

The protein resides in the cytoplasm. It is found in the myofibril. It localises to the sarcomere. The protein localises to the a band. In terms of biological role, structural component of the muscle thick filaments which is involved in assembly and organization of sarcomere myofilaments. Involved in ovulation. Plays a role in the formation of muscle connections, also called muscle arm extensions, between the body wall and the motor axons in the dorsal and ventral cord. In Caenorhabditis elegans, this protein is Paramyosin (unc-15).